Reading from the N-terminus, the 325-residue chain is Tetraacyldisaccharide 4'-kinase (325 aa).

An ATP-binding site is contributed by threonine 55–threonine 62.

This sequence belongs to the LpxK family.

It catalyses the reaction a lipid A disaccharide + ATP = a lipid IVA + ADP + H(+). It participates in glycolipid biosynthesis; lipid IV(A) biosynthesis; lipid IV(A) from (3R)-3-hydroxytetradecanoyl-[acyl-carrier-protein] and UDP-N-acetyl-alpha-D-glucosamine: step 6/6. Transfers the gamma-phosphate of ATP to the 4'-position of a tetraacyldisaccharide 1-phosphate intermediate (termed DS-1-P) to form tetraacyldisaccharide 1,4'-bis-phosphate (lipid IVA). This chain is Tetraacyldisaccharide 4'-kinase, found in Citrobacter koseri (strain ATCC BAA-895 / CDC 4225-83 / SGSC4696).